The primary structure comprises 121 residues: Basic phospholipase A2 homolog blK-PLA2 (121 aa).

7 disulfides stabilise this stretch: Cys26–Cys115, Cys28–Cys44, Cys43–Cys95, Cys49–Cys121, Cys50–Cys88, Cys57–Cys81, and Cys75–Cys86. The tract at residues 105–117 (KKYRYHLKPFCKK) is important for membrane-damaging activities in eukaryotes and bacteria; heparin-binding.

It belongs to the phospholipase A2 family. Group II subfamily. K49 sub-subfamily. As to quaternary structure, homodimer; non-covalently linked. As to expression, expressed by the venom gland.

The protein resides in the secreted. In terms of biological role, snake venom phospholipase A2 (PLA2) homolog that lacks enzymatic activity. Shows myotoxic and edema-inducing activities in vivo. A model of myotoxic mechanism has been proposed: an apo Lys49-PLA2 is activated by the entrance of a hydrophobic molecule (e.g. fatty acid) at the hydrophobic channel of the protein leading to a reorientation of a monomer. This reorientation causes a transition between 'inactive' to 'active' states, causing alignment of C-terminal and membrane-docking sites (MDoS) side-by-side and putting the membrane-disruption sites (MDiS) in the same plane, exposed to solvent and in a symmetric position for both monomers. The MDoS region stabilizes the toxin on membrane by the interaction of charged residues with phospholipid head groups. Subsequently, the MDiS region destabilizes the membrane with penetration of hydrophobic residues. This insertion causes a disorganization of the membrane, allowing an uncontrolled influx of ions (i.e. calcium and sodium), and eventually triggering irreversible intracellular alterations and cell death. The sequence is that of Basic phospholipase A2 homolog blK-PLA2 from Bothrops leucurus (Whitetail lancehead).